Here is a 124-residue protein sequence, read N- to C-terminus: Calvin cycle protein CP12-1, chloroplastic (124 aa).

Residues 1-47 (MTTIAAAGLNVATPRVVVRPVARVLGPVRLNYPWKFGSMKRMVVVKA) constitute a chloroplast transit peptide. 2 disulfide bridges follow: Cys-68–Cys-77 and Cys-110–Cys-119. Residues 90-124 (AASHARDKKKAGGSDPLEEYCNDNPETDECRTYDN) form a disordered region. Acidic residues predominate over residues 105–116 (PLEEYCNDNPET).

It belongs to the CP12 family. As to quaternary structure, monomer. Component of a complex that contains two dimers of PRK, two tetramers of GAPDH and CP12. CP12 associates with GAPDH, causing its conformation to change. This GAPDH/CP12 complex binds PRK to form a half-complex (one unit). This unit probably dimerizes due partially to interactions between the enzymes of each unit. Post-translationally, contains two disulfide bonds; only the oxidized protein, with two disulfide bonds, is active in complex formation. The C-terminal disulfide is involved in the interaction with GAPDH and the N-terminal disulfide mediates the binding of PRK with this binary complex. Mostly expressed in flowers, hypocotyl, cotyledons, leaves, stems, and flower stalks. Barely detectable in roots and siliques. Present in root tips and lateral roots. Accumulates in the cotyledons of etiolated seedlings.

The protein localises to the plastid. It is found in the chloroplast. Its function is as follows. Acts as a linker essential in the assembly of a core complex of PRK/GAPDH. Coordinates the reversible inactivation of chloroplast enzymes GAPDH and PRK during darkness in photosynthetic tissues. This is Calvin cycle protein CP12-1, chloroplastic (CP12-1) from Arabidopsis thaliana (Mouse-ear cress).